The chain runs to 188 residues: Elongation factor P (188 aa).

Position 34 is an N6-(3,6-diaminohexanoyl)-5-hydroxylysine (lysine 34).

This sequence belongs to the elongation factor P family. May be beta-lysylated on the epsilon-amino group of Lys-34 by the combined action of EpmA and EpmB, and then hydroxylated on the C5 position of the same residue by EpmC (if this protein is present). Lysylation is critical for the stimulatory effect of EF-P on peptide-bond formation. The lysylation moiety may extend toward the peptidyltransferase center and stabilize the terminal 3-CCA end of the tRNA. Hydroxylation of the C5 position on Lys-34 may allow additional potential stabilizing hydrogen-bond interactions with the P-tRNA.

It localises to the cytoplasm. Its pathway is protein biosynthesis; polypeptide chain elongation. Functionally, involved in peptide bond synthesis. Alleviates ribosome stalling that occurs when 3 or more consecutive Pro residues or the sequence PPG is present in a protein, possibly by augmenting the peptidyl transferase activity of the ribosome. Modification of Lys-34 is required for alleviation. The polypeptide is Elongation factor P (Xylella fastidiosa (strain M23)).